Consider the following 312-residue polypeptide: MLSPANAKNQRLVSLEDVGVLRGGRWLVRGVEFSVSRGEIVTLIGPNGSGKSTSAKAAIGVLKPDEGRVERLSGLKVGYVPQKLSIDWTLPLTVRRLMTLTGPLPERDMQAALEAAGIAHMIGAEVQHLSGGEFQRALMARAIARKPDLLVLDEPVQGVDFSGEIALYHLIKSIRNASGCGILLISHDLHVVMAETDTVICLNGHVCCRGTPEAVSRSPEYVRLFGSRAAQTLAVYSHHHDHTHLPDGRVLHADGSVTDHCHPEDGHHAHDSQEHAHGQDHVHAHEHSHDDHHGHDHAHEHAHSRSGEGRHA.

Residues 13 to 228 form the ABC transporter domain; the sequence is VSLEDVGVLR…PEYVRLFGSR (216 aa). Residue 45–52 coordinates ATP; it reads GPNGSGKS. Positions 241–312 are disordered; that stretch reads DHTHLPDGRV…HSRSGEGRHA (72 aa). Over residues 243-312 the composition is skewed to basic and acidic residues; that stretch reads THLPDGRVLH…HSRSGEGRHA (70 aa).

It belongs to the ABC transporter superfamily. Zinc importer (TC 3.A.1.15.5) family. In terms of assembly, the complex is composed of two ATP-binding proteins (ZnuC), two transmembrane proteins (ZnuB) and a solute-binding protein (ZnuA).

It localises to the cell inner membrane. It catalyses the reaction Zn(2+)(out) + ATP(in) + H2O(in) = Zn(2+)(in) + ADP(in) + phosphate(in) + H(+)(in). Its function is as follows. Part of the ABC transporter complex ZnuABC involved in zinc import. Responsible for energy coupling to the transport system. The polypeptide is Zinc import ATP-binding protein ZnuC (Rhizobium etli (strain ATCC 51251 / DSM 11541 / JCM 21823 / NBRC 15573 / CFN 42)).